Here is a 910-residue protein sequence, read N- to C-terminus: Protein translocase subunit SecA (910 aa).

Residues Gln89, 107 to 111 (GEGKT), and Asp502 each bind ATP. 4 residues coordinate Zn(2+): Cys894, Cys896, Cys905, and His906.

The protein belongs to the SecA family. Monomer and homodimer. Part of the essential Sec protein translocation apparatus which comprises SecA, SecYEG and auxiliary proteins SecDF-YajC and YidC. The cofactor is Zn(2+).

The protein resides in the cell inner membrane. The protein localises to the cytoplasm. It catalyses the reaction ATP + H2O + cellular proteinSide 1 = ADP + phosphate + cellular proteinSide 2.. In terms of biological role, part of the Sec protein translocase complex. Interacts with the SecYEG preprotein conducting channel. Has a central role in coupling the hydrolysis of ATP to the transfer of proteins into and across the cell membrane, serving both as a receptor for the preprotein-SecB complex and as an ATP-driven molecular motor driving the stepwise translocation of polypeptide chains across the membrane. The protein is Protein translocase subunit SecA of Mesorhizobium japonicum (strain LMG 29417 / CECT 9101 / MAFF 303099) (Mesorhizobium loti (strain MAFF 303099)).